Here is a 380-residue protein sequence, read N- to C-terminus: Crotonobetainyl-CoA reductase (380 aa).

Belongs to the acyl-CoA dehydrogenase family. In terms of assembly, homotetramer. Requires FAD as cofactor.

It is found in the cytoplasm. The catalysed reaction is 4-(trimethylamino)butanoyl-CoA + oxidized [electron-transfer flavoprotein] + H(+) = crotonobetainyl-CoA + reduced [electron-transfer flavoprotein]. It functions in the pathway amine and polyamine metabolism; carnitine metabolism. Catalyzes the reduction of crotonobetainyl-CoA to gamma-butyrobetainyl-CoA. This chain is Crotonobetainyl-CoA reductase, found in Citrobacter koseri (strain ATCC BAA-895 / CDC 4225-83 / SGSC4696).